Here is a 492-residue protein sequence, read N- to C-terminus: Protein adenylyltransferase Fic (492 aa).

Residues 1–18 (MGTEAEQPSPPAQQQDQE) show a composition bias toward low complexity. Residues 1-26 (MGTEAEQPSPPAQQQDQENPPLCKAQ) are disordered. A helical transmembrane segment spans residues 33–55 (LYRFVLIFVAGSLAAWTFHALSS). TPR repeat units lie at residues 118 to 151 (ALGALRMAQDLYLAGKDDKAARLFEHALALAPRH) and 152 to 186 (PEVLLRYGEFLEHNQRNIVLADQYYFQALTISPSN). The Inhibitory (S/T)XXXE(G/N) motif motif lies at 243–248 (SVGIEG). ATP is bound by residues Glu247 and 328 to 331 (VGGH). A Fido domain is found at 297–432 (ITIKDILELH…IRPFVRFIAD (136 aa)). Residue His375 is part of the active site. Residues 379-386 (DGNGRTSR), 411-412 (YY), and Asn419 each bind ATP.

Belongs to the fic family. In terms of assembly, homodimer; homodimerization may regulate adenylyltransferase and phosphodiesterase activities.

Its subcellular location is the membrane. It catalyses the reaction L-tyrosyl-[protein] + ATP = O-(5'-adenylyl)-L-tyrosyl-[protein] + diphosphate. It carries out the reaction L-threonyl-[protein] + ATP = 3-O-(5'-adenylyl)-L-threonyl-[protein] + diphosphate. The catalysed reaction is 3-O-(5'-adenylyl)-L-threonyl-[protein] + H2O = L-threonyl-[protein] + AMP + H(+). The side chain of Glu-247 determines which of the two opposing activities (AMPylase or de-AMPylase) will take place. In response to endoplasmic reticulum stress, mediates de-AMPylase activity. Adenylyltransferase activity is inhibited by the inhibitory helix present at the N-terminus: Glu-247 binds ATP and competes with ATP-binding at Arg-386, thereby preventing adenylyltransferase activity. In unstressed cells, disengagement of Glu-247 promotes adenylyltransferase activity. Activation dissociates ATP-binding from Glu-247, allowing ordered binding of the entire ATP moiety with the alpha-phosphate in an orientation that is productive for accepting an incoming target hydroxyl side chain. Functionally, protein that can both mediate the addition of adenosine 5'-monophosphate (AMP) to specific residues of target proteins (AMPylation), and the removal of the same modification from target proteins (de-AMPylation), depending on the context. The side chain of Glu-247 determines which of the two opposing activities (AMPylase or de-AMPylase) will take place. Acts as a key regulator of the unfolded protein response (UPR) by mediating AMPylation or de-AMPylation of Hsc70-3/BiP. In unstressed cells, acts as an adenylyltransferase by mediating AMPylation of Hsc70-3/BiP at 'Thr-518', thereby inactivating it. In response to endoplasmic reticulum stress, acts as a phosphodiesterase by mediating removal of ATP (de-AMPylation) from Hsc70-3/BiP at 'Thr-518', leading to restore HSPA5/BiP activity. This chain is Protein adenylyltransferase Fic, found in Drosophila melanogaster (Fruit fly).